The chain runs to 217 residues: Aminopyrimidine aminohydrolase (217 aa).

A substrate-binding site is contributed by D44. The Nucleophile role is filled by C135. The substrate site is built by Y139 and Y165. The Proton donor role is filled by E207.

This sequence belongs to the TenA family. Homotetramer.

It carries out the reaction 4-amino-5-aminomethyl-2-methylpyrimidine + H2O = 4-amino-5-hydroxymethyl-2-methylpyrimidine + NH4(+). It functions in the pathway cofactor biosynthesis; thiamine diphosphate biosynthesis. Functionally, catalyzes an amino-pyrimidine hydrolysis reaction at the C5' of the pyrimidine moiety of thiamine compounds to give a hydroxymethylpyrimidine (HMP). Displays low activity on 4-amino-5-aminomethyl-2-methylpyrimidine as substrate, indicating that the enzyme may act on a different HMP precursor that may derive from the human stomach food assumption or processing. Is probably involved in thiamine biosynthesis. Does not display thiaminase II activity, as it is unable to hydrolyze thiamine. This is Aminopyrimidine aminohydrolase from Helicobacter pylori (Campylobacter pylori).